A 261-amino-acid chain; its full sequence is Small ribosomal subunit protein eS4 (261 aa).

In terms of domain architecture, S4 RNA-binding spans 42–100 (LPLILILRNRLKYALTYREVVSILMQRHILVDGKIHFCIRLSDVVSIPKTNENFRLLYD).

The protein belongs to the eukaryotic ribosomal protein eS4 family.

The protein resides in the cytoplasm. The polypeptide is Small ribosomal subunit protein eS4 (RPS4) (Prunus armeniaca (Apricot)).